The chain runs to 707 residues: Elongation factor G (707 aa).

One can recognise a tr-type G domain in the interval 8 to 294; it reads ERYRNFGIIA…GVVDYLPSPL (287 aa). GTP-binding positions include 17 to 24, 92 to 96, and 146 to 149; these read AHIDAGKT, DTPGH, and NKMD.

It belongs to the TRAFAC class translation factor GTPase superfamily. Classic translation factor GTPase family. EF-G/EF-2 subfamily.

It is found in the cytoplasm. Catalyzes the GTP-dependent ribosomal translocation step during translation elongation. During this step, the ribosome changes from the pre-translocational (PRE) to the post-translocational (POST) state as the newly formed A-site-bound peptidyl-tRNA and P-site-bound deacylated tRNA move to the P and E sites, respectively. Catalyzes the coordinated movement of the two tRNA molecules, the mRNA and conformational changes in the ribosome. In Hyphomonas neptunium (strain ATCC 15444), this protein is Elongation factor G.